The sequence spans 106 residues: Testis-specific basic protein Y 2 (106 aa).

This sequence belongs to the VCX/VCY family. As to quaternary structure, interacts with MAP1S. Interacts with UBE3A (via HECT domain). As to expression, expressed exclusively in testis. Expressed in ejaculated spermatozoa of germ cell. Expressed in the nuclei of spermatogonia, spermatocytes, and round spermatids, except elongated spermatids (at protein level).

The polypeptide is Testis-specific basic protein Y 2 (BPY2) (Homo sapiens (Human)).